Here is a 366-residue protein sequence, read N- to C-terminus: Anhydro-N-acetylmuramic acid kinase (366 aa).

10 to 17 is an ATP binding site; the sequence is GTSMDGID.

Belongs to the anhydro-N-acetylmuramic acid kinase family.

The catalysed reaction is 1,6-anhydro-N-acetyl-beta-muramate + ATP + H2O = N-acetyl-D-muramate 6-phosphate + ADP + H(+). It participates in amino-sugar metabolism; 1,6-anhydro-N-acetylmuramate degradation. It functions in the pathway cell wall biogenesis; peptidoglycan recycling. Its function is as follows. Catalyzes the specific phosphorylation of 1,6-anhydro-N-acetylmuramic acid (anhMurNAc) with the simultaneous cleavage of the 1,6-anhydro ring, generating MurNAc-6-P. Is required for the utilization of anhMurNAc either imported from the medium or derived from its own cell wall murein, and thus plays a role in cell wall recycling. The chain is Anhydro-N-acetylmuramic acid kinase from Legionella pneumophila (strain Lens).